An 855-amino-acid chain; its full sequence is Cytosolic phospholipase A2 zeta (855 aa).

A C2 domain is found at 27–145; sequence EKSEPQWKHR…QLGQPCTKNF (119 aa). The Ca(2+) site is built by Asp-60, Asp-66, Asp-116, Asp-118, and Asp-123. A PLA2c domain is found at 304–855; sequence MSSSGDLDLR…RRQAGGRVGG (552 aa). Ser-393 (nucleophile) is an active-site residue. The active-site Proton acceptor is Asp-685.

It depends on Ca(2+) as a cofactor. In terms of tissue distribution, strongly expressed in thyroid, expressed at intermediate level in stomach and at very low level in large intestine and prostate.

The protein localises to the cytoplasm. The protein resides in the cytosol. It localises to the cell membrane. It is found in the mitochondrion. The catalysed reaction is a 1,2-diacyl-sn-glycero-3-phosphocholine + H2O = a 1-acyl-sn-glycero-3-phosphocholine + a fatty acid + H(+). It carries out the reaction a 1-O-alkyl-2-acyl-sn-glycero-3-phosphocholine + H2O = a 1-O-alkyl-sn-glycero-3-phosphocholine + a fatty acid + H(+). It catalyses the reaction 1-hexadecanoyl-2-(9Z-octadecenoyl)-sn-glycero-3-phosphocholine + H2O = 2-(9Z-octadecenoyl)-sn-glycero-3-phosphocholine + hexadecanoate + H(+). The enzyme catalyses 1-hexadecanoyl-2-(9Z,12Z-octadecadienoyl)-sn-glycero-3-phosphocholine + H2O = (9Z,12Z)-octadecadienoate + 1-hexadecanoyl-sn-glycero-3-phosphocholine + H(+). The catalysed reaction is 1-hexadecanoyl-2-(5Z,8Z,11Z,14Z-eicosatetraenoyl)-sn-glycero-3-phosphocholine + H2O = 1-hexadecanoyl-sn-glycero-3-phosphocholine + (5Z,8Z,11Z,14Z)-eicosatetraenoate + H(+). It carries out the reaction 1-hexadecanoyl-2-(9Z,12Z-octadecadienoyl)-sn-glycero-3-phosphoethanolamine + H2O = 1-hexadecanoyl-sn-glycero-3-phosphoethanolamine + (9Z,12Z)-octadecadienoate + H(+). It catalyses the reaction 1-hexadecanoyl-2-(5Z,8Z,11Z,14Z-eicosatetraenoyl)-sn-glycero-3-phosphoethanolamine + H2O = 1-hexadecanoyl-sn-glycero-3-phosphoethanolamine + (5Z,8Z,11Z,14Z)-eicosatetraenoate + H(+). The enzyme catalyses 1-(5Z,8Z,11Z,14Z-eicosatetraenoyl)-2-O-hexadecyl-sn-glycero-3-phosphocholine + H2O = 2-O-hexadecyl-sn-glycero-3-phosphocholine + (5Z,8Z,11Z,14Z)-eicosatetraenoate + H(+). The catalysed reaction is 1-O-hexadecyl-2-(5Z,8Z,11Z,14Z)-eicosatetraenoyl-sn-glycero-3-phosphocholine + H2O = 1-O-hexadecyl-sn-glycero-3-phosphocholine + (5Z,8Z,11Z,14Z)-eicosatetraenoate + H(+). It carries out the reaction 1-hexadecanoyl-sn-glycero-3-phosphocholine + H2O = sn-glycerol 3-phosphocholine + hexadecanoate + H(+). Its activity is regulated as follows. Stimulated by cytosolic Ca(2+). Its function is as follows. Has calcium-dependent phospholipase and lysophospholipase activities with a potential role in membrane lipid remodeling and biosynthesis of lipid mediators. Preferentially hydrolyzes the ester bond of the fatty acyl group attached at sn-2 position of phospholipids (phospholipase A2 activity). Selectively hydrolyzes sn-2 arachidonoyl group from membrane phospholipids, providing the precursor for eicosanoid biosynthesis. In myocardial mitochondria, plays a major role in arachidonate release that is metabolically channeled to the formation of cardioprotective eicosanoids, epoxyeicosatrienoates (EETs). This chain is Cytosolic phospholipase A2 zeta (Pla2g4f), found in Mus musculus (Mouse).